We begin with the raw amino-acid sequence, 299 residues long: Prolyl 4-hydroxylase 2 (299 aa).

Residues 1–5 (MSMSR) lie on the Cytoplasmic side of the membrane. Residues 6–26 (LGLLLFVAILLVLLQSSTCLI) form a helical; Signal-anchor for type II membrane protein membrane-spanning segment. Residues 27–299 (SSPSSIINPS…GNCRRSCKAC (273 aa)) lie on the Lumenal side of the membrane. Positions 121-246 (NGEDLQVLRY…KWSATKWIHV (126 aa)) constitute a Fe2OG dioxygenase domain. The Fe cation site is built by His139 and Asp141. Asn165 is a glycosylation site (N-linked (GlcNAc...) asparagine). Fe cation is bound at residue His227. Lys237 is a 2-oxoglutarate binding site. Residues Asn258 and Asn263 are each glycosylated (N-linked (GlcNAc...) asparagine). Positions 259–299 (CTDVNESCERWAVLGECGKNPEYMVGTPEIPGNCRRSCKAC) constitute a ShKT domain. 3 disulfides stabilise this stretch: Cys259–Cys299, Cys266–Cys292, and Cys275–Cys296.

Belongs to the P4HA family. The cofactor is Fe(2+). L-ascorbate is required as a cofactor. As to expression, expressed in epidermal root hair cells (trichoblasts).

Its subcellular location is the endoplasmic reticulum membrane. The protein localises to the golgi apparatus membrane. It carries out the reaction L-prolyl-[collagen] + 2-oxoglutarate + O2 = trans-4-hydroxy-L-prolyl-[collagen] + succinate + CO2. Catalyzes the post-translational formation of 4-hydroxyproline in -Xaa-Pro-Gly- sequences in proline-rich peptide sequences of plant glycoproteins and other proteins. Hydroxyprolines are important constituent of many plant cell wall glycoproteins such as extensins, hydroxyproline-rich glycoproteins, lectins and arabinogalactan proteins. Possesses high affinity for leucine-rich repeat and proline-rich extensins of root cell walls that are essential for root hair development. Hydroxyprolines define the subsequent O-glycosylation sites by arabinosyltransferases which elongate the O-arabinosides on extensins. Has low affinity for the substrates tested in vitro. The polypeptide is Prolyl 4-hydroxylase 2 (Arabidopsis thaliana (Mouse-ear cress)).